The sequence spans 728 residues: 1,4-alpha-glucan branching enzyme GlgB (728 aa).

Catalysis depends on Asp405, which acts as the Nucleophile. The active-site Proton donor is Glu458.

The protein belongs to the glycosyl hydrolase 13 family. GlgB subfamily. As to quaternary structure, monomer.

It carries out the reaction Transfers a segment of a (1-&gt;4)-alpha-D-glucan chain to a primary hydroxy group in a similar glucan chain.. It participates in glycan biosynthesis; glycogen biosynthesis. In terms of biological role, catalyzes the formation of the alpha-1,6-glucosidic linkages in glycogen by scission of a 1,4-alpha-linked oligosaccharide from growing alpha-1,4-glucan chains and the subsequent attachment of the oligosaccharide to the alpha-1,6 position. The sequence is that of 1,4-alpha-glucan branching enzyme GlgB from Escherichia coli O157:H7.